The following is a 103-amino-acid chain: Large ribosomal subunit protein bL21 (103 aa).

The protein belongs to the bacterial ribosomal protein bL21 family. As to quaternary structure, part of the 50S ribosomal subunit. Contacts protein L20.

Its function is as follows. This protein binds to 23S rRNA in the presence of protein L20. This chain is Large ribosomal subunit protein bL21, found in Bordetella avium (strain 197N).